Consider the following 214-residue polypeptide: Large ribosomal subunit protein bL25 (214 aa).

A disordered region spans residues 194–214 (TTEAEETAEPEVIRRKEEEEE). Residues 204–214 (EVIRRKEEEEE) are compositionally biased toward basic and acidic residues.

It belongs to the bacterial ribosomal protein bL25 family. CTC subfamily. Part of the 50S ribosomal subunit; part of the 5S rRNA/L5/L18/L25 subcomplex. Contacts the 5S rRNA. Binds to the 5S rRNA independently of L5 and L18.

This is one of the proteins that binds to the 5S RNA in the ribosome where it forms part of the central protuberance. This Thermotoga petrophila (strain ATCC BAA-488 / DSM 13995 / JCM 10881 / RKU-1) protein is Large ribosomal subunit protein bL25.